Reading from the N-terminus, the 491-residue chain is MAAVDVNQTITGHKSAIIRNYTTNPRLIYQTVSGVNGPLVILNDVKFPQFSEIVKITLPDGSQRSGQVLEIAKNKAVVQVFEGTSGIDAKNTICEFTGDILRTPVSEDMLGRIFNGSGKPIDKGPPVLAEDFLDINGQPINPWSRIYPEEMIQTGISAIDVMNSIARGQKIPIFSAAGLPHNEIAAQIVRQGGLVQLPDRPHEQTNFAIVFAAMGVNMETARFFKQDFEENGSMENVCLFLNLANDPTIERIITPRIALTAAEFLAYQCSKHVLVVLTDMSSYAEALREVSAAREEVPGRRGFPGYMYTDLATIYERAGRVEGRDGSITQIPILTMPNDDITHPIPDLTGYITEGQIYVDRQLHNRLIYPPINVLPSLSRLMKSAIGDKMTREDHSDVSNQLYACYAIGKDVQAMKAVVGEEALSSDDLLYLEFLVKFEKNFISQGHYENRTIFESLDIGWELLRIFPREMLKRIPAKSLDKYYPRGGAKE.

An ATP-binding site is contributed by Arg380.

Belongs to the ATPase alpha/beta chains family. V-ATPase is a heteromultimeric enzyme made up of two complexes: the ATP-hydrolytic V1 complex and the proton translocation V0 complex. The V1 complex consists of three catalytic AB heterodimers that form a heterohexamer, three peripheral stalks each consisting of EG heterodimers, one central rotor including subunits D and F, and the regulatory subunits C and H. The proton translocation complex V0 consists of the proton transport subunit a, a ring of proteolipid subunits c9c'', rotary subunit d, subunits e and f, and the accessory subunits vah-19/Ac45 and vah-20/PRR.

In terms of biological role, non-catalytic subunit of the V1 complex of vacuolar(H+)-ATPase (V-ATPase), a multisubunit enzyme composed of a peripheral complex (V1) that hydrolyzes ATP and a membrane integral complex (V0) that translocates protons. V-ATPase is responsible for acidifying and maintaining the pH of intracellular compartments and in some cell types, is targeted to the plasma membrane, where it is responsible for acidifying the extracellular environment. Essential for the proper assembly and activity of V-ATPase. Required maternally for early embryogenesis and zygotically during morphogenesis. Specifically, involved in the clearance of apoptotic cell corpses in embryos. Also, during embryonic development, the V-ATPase is required to repress fusion of epidermal cells probably by negatively regulating eff-1-mediated cell fusion. In neurons, required for necrotic cell death by promoting intracellular acidification. Required for cell death induced by hypoxia. Required for acidification of synaptic vesicles and the release of neurotransmitters from adult neurons. The protein is Probable V-type proton ATPase subunit B 1 of Caenorhabditis briggsae.